The sequence spans 92 residues: Large ribosomal subunit protein bL25 (92 aa).

This sequence belongs to the bacterial ribosomal protein bL25 family. As to quaternary structure, part of the 50S ribosomal subunit; part of the 5S rRNA/L5/L18/L25 subcomplex. Contacts the 5S rRNA. Binds to the 5S rRNA independently of L5 and L18.

In terms of biological role, this is one of the proteins that binds to the 5S RNA in the ribosome where it forms part of the central protuberance. The protein is Large ribosomal subunit protein bL25 of Vibrio cholerae serotype O1 (strain ATCC 39541 / Classical Ogawa 395 / O395).